The sequence spans 307 residues: MDIETFLAGERAADGYRCGFVAIVGRPNVGKSTLMNHLIGQKISITSKKAQTTRNRVTGIYTDDTAQFVFVDTPGFQTDHRNALNDRLNQNVTEALGGVDVVVFVVEAMRFTDADRVVLKQLPKHTPVILVVNKIDKDKAKDRYALEAFVAQVRAEFEFAAAEAVSAKHGLRIANLLELIKPYLPESVPMYPEDMVTDKSARFLAMEIVREKLFRYLGEELPYAMNVEVEQFEEEDGLNRIYIAVLVDKESQKAILIGKGGERLKKISTEARLDMEKLFDTKVFLKVWVKVKSGWADDIRFLRELGL.

The 170-residue stretch at 17–186 (RCGFVAIVGR…LELIKPYLPE (170 aa)) folds into the Era-type G domain. Residues 25–32 (GRPNVGKS) form a G1 region. 25–32 (GRPNVGKS) provides a ligand contact to GTP. Positions 51-55 (QTTRN) are G2. The segment at 72–75 (DTPG) is G3. Residues 72 to 76 (DTPGF) and 133 to 136 (NKID) contribute to the GTP site. The tract at residues 133-136 (NKID) is G4. The segment at 165 to 167 (VSA) is G5. The KH type-2 domain maps to 217-293 (LGEELPYAMN…FLKVWVKVKS (77 aa)).

It belongs to the TRAFAC class TrmE-Era-EngA-EngB-Septin-like GTPase superfamily. Era GTPase family. In terms of assembly, monomer.

It localises to the cytoplasm. It is found in the cell inner membrane. Functionally, an essential GTPase that binds both GDP and GTP, with rapid nucleotide exchange. Plays a role in 16S rRNA processing and 30S ribosomal subunit biogenesis and possibly also in cell cycle regulation and energy metabolism. The protein is GTPase Era of Neisseria meningitidis serogroup A / serotype 4A (strain DSM 15465 / Z2491).